A 233-amino-acid chain; its full sequence is Orotidine 5'-phosphate decarboxylase (233 aa).

Substrate-binding positions include aspartate 9, lysine 31, 58–67 (DLKLHDIPNT), threonine 120, arginine 182, glutamine 191, glycine 211, and arginine 212. Lysine 60 functions as the Proton donor in the catalytic mechanism.

Belongs to the OMP decarboxylase family. Type 1 subfamily. As to quaternary structure, homodimer.

It catalyses the reaction orotidine 5'-phosphate + H(+) = UMP + CO2. The protein operates within pyrimidine metabolism; UMP biosynthesis via de novo pathway; UMP from orotate: step 2/2. Functionally, catalyzes the decarboxylation of orotidine 5'-monophosphate (OMP) to uridine 5'-monophosphate (UMP). In Listeria monocytogenes serotype 4b (strain CLIP80459), this protein is Orotidine 5'-phosphate decarboxylase.